A 253-amino-acid chain; its full sequence is 2,3-bisphosphoglycerate-dependent phosphoglycerate mutase (253 aa).

Substrate is bound by residues 12 to 19 (RHGESEWN), 25 to 26 (TG), R64, 91 to 94 (ERHY), K102, and 118 to 119 (RR). Catalysis depends on H13, which acts as the Tele-phosphohistidine intermediate. The active-site Proton donor/acceptor is E91. A disordered region spans residues 126–148 (PPLADGSEFSQSDDPRYASIPPE). 187–188 (GN) is a substrate binding site.

The protein belongs to the phosphoglycerate mutase family. BPG-dependent PGAM subfamily.

It carries out the reaction (2R)-2-phosphoglycerate = (2R)-3-phosphoglycerate. The protein operates within carbohydrate degradation; glycolysis; pyruvate from D-glyceraldehyde 3-phosphate: step 3/5. In terms of biological role, catalyzes the interconversion of 2-phosphoglycerate and 3-phosphoglycerate. The polypeptide is 2,3-bisphosphoglycerate-dependent phosphoglycerate mutase (Streptomyces avermitilis (strain ATCC 31267 / DSM 46492 / JCM 5070 / NBRC 14893 / NCIMB 12804 / NRRL 8165 / MA-4680)).